Consider the following 92-residue polypeptide: Bombyxin A-5 (92 aa).

Positions 1–19 (MKLLLAIALMLTTVMWAST) are cleaved as a signal peptide. Gln-20 carries the post-translational modification Pyrrolidone carboxylic acid. Cystine bridges form between Cys-29–Cys-79, Cys-41–Cys-92, and Cys-78–Cys-83. Positions 50–71 (SDAQFASYGSAWLMPYSEGRDQ) are cleaved as a propeptide — c peptide like.

It belongs to the insulin family. Heterodimer of a B chain and an A chain linked by two disulfide bonds.

The protein localises to the secreted. Brain peptide responsible for activation of prothoracic glands to produce ecdysone in insects. In Bombyx mori (Silk moth), this protein is Bombyxin A-5 (BBXA5).